The sequence spans 90 residues: Protein S100-A6 (90 aa).

EF-hand domains lie at Leu-12–Lys-47 and Leu-48–Ile-83. Positions 28 and 33 each coordinate Ca(2+). Lys-40 is subject to N6-acetyllysine. A Phosphoserine modification is found at Ser-46. The residue at position 47 (Lys-47) is an N6-acetyllysine; alternate. Lys-47 carries the N6-succinyllysine; alternate modification. Residues Asp-61, Asn-63, Asp-65, Glu-67, and Glu-72 each contribute to the Ca(2+) site.

Belongs to the S-100 family. In terms of assembly, homodimer; head to tail assembly of 2 subunits. Interacts with CACYBP in a calcium-dependent manner. Interacts with ANXA2 and ANXA11 (via N-terminus). Interacts with SUGT1. Interacts with TP53; has higher affinity for TP53 that is phosphorylated on its N-terminal domain, and lower affinity for TP53 that is phosphorylated on its C-terminal domain. Interacts with tropomyosin. Interacts with FKBP4. Interacts with PPP5C (via TPR repeats); the interaction is calcium-dependent and modulates PPP5C activity. Interacts with TPPP; this interaction inhibits TPPP dimerization. In terms of processing, the N-terminus is blocked.

The protein localises to the nucleus envelope. The protein resides in the cytoplasm. It localises to the cell membrane. Functionally, may function as calcium sensor and modulator, contributing to cellular calcium signaling. May function by interacting with other proteins, such as TPR-containing proteins, and indirectly play a role in many physiological processes such as the reorganization of the actin cytoskeleton and in cell motility. Binds 2 calcium ions. Calcium binding is cooperative. This chain is Protein S100-A6 (S100A6), found in Homo sapiens (Human).